A 240-amino-acid polypeptide reads, in one-letter code: UDP-2,3-diacylglucosamine hydrolase (240 aa).

Mn(2+) contacts are provided by D8, H10, D41, N79, and H114. N79–R80 contacts substrate. D122, S160, N164, K167, and H195 together coordinate substrate. 2 residues coordinate Mn(2+): H195 and H197.

It belongs to the LpxH family. The cofactor is Mn(2+).

It is found in the cell inner membrane. It catalyses the reaction UDP-2-N,3-O-bis[(3R)-3-hydroxytetradecanoyl]-alpha-D-glucosamine + H2O = 2-N,3-O-bis[(3R)-3-hydroxytetradecanoyl]-alpha-D-glucosaminyl 1-phosphate + UMP + 2 H(+). It participates in glycolipid biosynthesis; lipid IV(A) biosynthesis; lipid IV(A) from (3R)-3-hydroxytetradecanoyl-[acyl-carrier-protein] and UDP-N-acetyl-alpha-D-glucosamine: step 4/6. Hydrolyzes the pyrophosphate bond of UDP-2,3-diacylglucosamine to yield 2,3-diacylglucosamine 1-phosphate (lipid X) and UMP by catalyzing the attack of water at the alpha-P atom. Involved in the biosynthesis of lipid A, a phosphorylated glycolipid that anchors the lipopolysaccharide to the outer membrane of the cell. This Escherichia coli (strain SE11) protein is UDP-2,3-diacylglucosamine hydrolase.